The chain runs to 142 residues: Relaxin-3 (142 aa).

The first 25 residues, 1 to 25 (MARYMLLLLLAVWVLTGELWPGAEA), serve as a signal peptide directing secretion. Disulfide bonds link Cys35–Cys129, Cys47–Cys142, and Cys128–Cys133. Positions 55 to 118 (SDILAHEAMG…GTPGVLRGSR (64 aa)) are cleaved as a propeptide — connecting peptide.

The protein belongs to the insulin family. As to quaternary structure, heterodimer of a B chain and an A chain linked by two disulfide bonds.

It is found in the secreted. In terms of biological role, may play a role in neuropeptide signaling processes. Ligand for LGR7, RXFP3 and RXFP4. The protein is Relaxin-3 (RLN3) of Homo sapiens (Human).